Here is a 255-residue protein sequence, read N- to C-terminus: Hydroxyacylglutathione hydrolase (255 aa).

Zn(2+) is bound by residues H56, H58, D60, H61, H114, D133, and H171.

It belongs to the metallo-beta-lactamase superfamily. Glyoxalase II family. As to quaternary structure, monomer. It depends on Zn(2+) as a cofactor.

It catalyses the reaction an S-(2-hydroxyacyl)glutathione + H2O = a 2-hydroxy carboxylate + glutathione + H(+). It participates in secondary metabolite metabolism; methylglyoxal degradation; (R)-lactate from methylglyoxal: step 2/2. Thiolesterase that catalyzes the hydrolysis of S-D-lactoyl-glutathione to form glutathione and D-lactic acid. The protein is Hydroxyacylglutathione hydrolase of Rhodopseudomonas palustris (strain HaA2).